The sequence spans 513 residues: Na(+)/H(+) antiporter NhaB (513 aa).

12 helical membrane-spanning segments follow: residues 23–43 (LALI…PFVA), 52–72 (IFTL…LLAI), 97–117 (LLLM…LFIF), 120–140 (LLLS…AAAF), 144–164 (FLDA…FYGI), 202–222 (LMMH…VGEP), 238–258 (FFLR…LTCL), 303–323 (AIIG…VGLI), 348–368 (TESL…AVII), 391–411 (LFYI…VGTI), 447–467 (ATPN…APLI), and 475–495 (VWMA…CVEF).

The protein belongs to the NhaB Na(+)/H(+) (TC 2.A.34) antiporter family.

The protein localises to the cell inner membrane. The catalysed reaction is 2 Na(+)(in) + 3 H(+)(out) = 2 Na(+)(out) + 3 H(+)(in). In terms of biological role, na(+)/H(+) antiporter that extrudes sodium in exchange for external protons. The protein is Na(+)/H(+) antiporter NhaB of Escherichia coli O6:K15:H31 (strain 536 / UPEC).